A 255-amino-acid polypeptide reads, in one-letter code: uncharacterized protein (255 aa).

Positions 253-255 (SKI) match the Microbody targeting signal motif.

This sequence belongs to the enoyl-CoA hydratase/isomerase family.

It localises to the peroxisome. This is an uncharacterized protein from Caenorhabditis elegans.